Reading from the N-terminus, the 60-residue chain is Large ribosomal subunit protein uL30 (60 aa).

The protein belongs to the universal ribosomal protein uL30 family. In terms of assembly, part of the 50S ribosomal subunit.

The sequence is that of Large ribosomal subunit protein uL30 from Streptococcus pneumoniae (strain Hungary19A-6).